Consider the following 150-residue polypeptide: Deoxyuridine 5'-triphosphate nucleotidohydrolase (150 aa).

Substrate-binding positions include Arg69–Gly71, Asn82, Thr86–Asp88, and Lys96.

Belongs to the dUTPase family. Requires Mg(2+) as cofactor.

It carries out the reaction dUTP + H2O = dUMP + diphosphate + H(+). It participates in pyrimidine metabolism; dUMP biosynthesis; dUMP from dCTP (dUTP route): step 2/2. In terms of biological role, this enzyme is involved in nucleotide metabolism: it produces dUMP, the immediate precursor of thymidine nucleotides and it decreases the intracellular concentration of dUTP so that uracil cannot be incorporated into DNA. The sequence is that of Deoxyuridine 5'-triphosphate nucleotidohydrolase from Aquifex aeolicus (strain VF5).